The chain runs to 430 residues: MDLLSDIEKQLQKATAQGFLIALSGGLDSTVLLSLFAKLCQKQPHLPPLSVRAIHIHHGLSPNADSWAKHCQNLCDQFQIPLIIERVQVDKTNGIEAGAREARYQAIKKHLQIQEMLVTAHHLNDQTETFFLALKRGSGLQGLSAMQQQSVLFGMPIFRPLLGFTRPQLEDYAQQEKLNWVTDESNEDNRYDRNFLRNEILPKLRERWAHFDLAVQRSAQHCFEQQQLINDLLSEIFTEHCQIKNQFKLLQFRQYSLAKQTALLRMWLAKNQLEMPSKRQLTQLINDVIFAKEEANPQFQLVNKVIRRYQDSLYLTKPFSDLTKCTLKLEQNMLNLPDDLGNLTVHENEHNLIFYWQDYSVTLEKTNLPISIRFGYSGKVKHHPKRPREDIKKIWQELSVPPWERNRIPLIFYGNELKSAVGFFRVFDEY.

Position 24–29 (24–29) interacts with ATP; sequence SGGLDS.

It belongs to the tRNA(Ile)-lysidine synthase family.

It localises to the cytoplasm. The enzyme catalyses cytidine(34) in tRNA(Ile2) + L-lysine + ATP = lysidine(34) in tRNA(Ile2) + AMP + diphosphate + H(+). Functionally, ligates lysine onto the cytidine present at position 34 of the AUA codon-specific tRNA(Ile) that contains the anticodon CAU, in an ATP-dependent manner. Cytidine is converted to lysidine, thus changing the amino acid specificity of the tRNA from methionine to isoleucine. The chain is tRNA(Ile)-lysidine synthase from Haemophilus influenzae (strain 86-028NP).